A 1158-amino-acid chain; its full sequence is Rho1 guanine nucleotide exchange factor 2 (1158 aa).

The tract at residues arginine 42 to glycine 141 is disordered. The segment covering glycine 45–asparagine 63 has biased composition (polar residues). The span at phenylalanine 68 to leucine 81 shows a compositional bias: low complexity. Positions lysine 97–aspartate 108 are enriched in polar residues. The span at serine 132–glycine 141 shows a compositional bias: low complexity. The 188-residue stretch at lysine 447–glutamate 634 folds into the DH domain. The PH domain occupies leucine 670 to isoleucine 805. Phosphoserine occurs at positions 746 and 747. Residues glycine 825–isoleucine 1120 enclose the CNH domain.

The protein localises to the cytoplasm. Functionally, stimulates the exchange of Rho1 and Rho5 GDP-bound form into GTP-bound form. Controls septum formation, cell wall synthesis and localization of F-actin patches. In Schizosaccharomyces pombe (strain 972 / ATCC 24843) (Fission yeast), this protein is Rho1 guanine nucleotide exchange factor 2 (rgf2).